The sequence spans 946 residues: Bifunctional glutamine synthetase adenylyltransferase/adenylyl-removing enzyme (946 aa).

The tract at residues 1 to 440 is adenylyl removase; sequence MKPLSSPLQQ…VFNELIGDDE (440 aa). An adenylyl transferase region spans residues 449–946; sequence SEQWRELWQD…ASWQKWLVEE (498 aa).

It belongs to the GlnE family. Requires Mg(2+) as cofactor.

The catalysed reaction is [glutamine synthetase]-O(4)-(5'-adenylyl)-L-tyrosine + phosphate = [glutamine synthetase]-L-tyrosine + ADP. The enzyme catalyses [glutamine synthetase]-L-tyrosine + ATP = [glutamine synthetase]-O(4)-(5'-adenylyl)-L-tyrosine + diphosphate. Its function is as follows. Involved in the regulation of glutamine synthetase GlnA, a key enzyme in the process to assimilate ammonia. When cellular nitrogen levels are high, the C-terminal adenylyl transferase (AT) inactivates GlnA by covalent transfer of an adenylyl group from ATP to specific tyrosine residue of GlnA, thus reducing its activity. Conversely, when nitrogen levels are low, the N-terminal adenylyl removase (AR) activates GlnA by removing the adenylyl group by phosphorolysis, increasing its activity. The regulatory region of GlnE binds the signal transduction protein PII (GlnB) which indicates the nitrogen status of the cell. The sequence is that of Bifunctional glutamine synthetase adenylyltransferase/adenylyl-removing enzyme from Shigella boydii serotype 18 (strain CDC 3083-94 / BS512).